A 678-amino-acid chain; its full sequence is DNA ligase (678 aa).

Residues 47–51 (DSDYD), 96–97 (SL), and glutamate 122 each bind NAD(+). The active-site N6-AMP-lysine intermediate is lysine 124. Arginine 145, glutamate 182, lysine 300, and lysine 324 together coordinate NAD(+). Zn(2+) is bound by residues cysteine 418, cysteine 421, cysteine 436, and cysteine 442. One can recognise a BRCT domain in the interval 602-678 (AYNESFTGKT…ILEDNLKDLL (77 aa)).

This sequence belongs to the NAD-dependent DNA ligase family. LigA subfamily. Mg(2+) is required as a cofactor. The cofactor is Mn(2+).

It catalyses the reaction NAD(+) + (deoxyribonucleotide)n-3'-hydroxyl + 5'-phospho-(deoxyribonucleotide)m = (deoxyribonucleotide)n+m + AMP + beta-nicotinamide D-nucleotide.. DNA ligase that catalyzes the formation of phosphodiester linkages between 5'-phosphoryl and 3'-hydroxyl groups in double-stranded DNA using NAD as a coenzyme and as the energy source for the reaction. It is essential for DNA replication and repair of damaged DNA. The protein is DNA ligase of Francisella tularensis subsp. holarctica (strain OSU18).